A 254-amino-acid chain; its full sequence is Germin-like protein 4-1 (254 aa).

The N-terminal stretch at 1-27 (MASRAFAAVFAAVALVVCSSVLPRALA) is a signal peptide. A disulfide bridge links cysteine 37 with cysteine 52. Residues 67 to 220 (KALGVPGNTV…AFMIDKDQVD (154 aa)) enclose the Cupin type-1 domain. The Mn(2+) site is built by histidine 115, histidine 117, glutamate 122, and histidine 166.

This sequence belongs to the germin family. In terms of assembly, oligomer (believed to be a pentamer but probably hexamer).

The protein resides in the secreted. Its subcellular location is the extracellular space. It localises to the apoplast. Its function is as follows. May play a role in plant defense. Probably has no oxalate oxidase activity even if the active site is conserved. The protein is Germin-like protein 4-1 of Oryza sativa subsp. japonica (Rice).